Reading from the N-terminus, the 407-residue chain is Methylthioribose kinase (407 aa).

ATP-binding positions include Asn40, Lys57, and 111 to 113 (EDL). Asp229 is a substrate binding site. ATP is bound at residue 246–248 (DAE). Substrate is bound at residue Arg344.

This sequence belongs to the methylthioribose kinase family. As to quaternary structure, homodimer.

The enzyme catalyses 5-(methylsulfanyl)-D-ribose + ATP = 5-(methylsulfanyl)-alpha-D-ribose 1-phosphate + ADP + H(+). It participates in amino-acid biosynthesis; L-methionine biosynthesis via salvage pathway; S-methyl-5-thio-alpha-D-ribose 1-phosphate from S-methyl-5'-thioadenosine (hydrolase route): step 2/2. Catalyzes the phosphorylation of methylthioribose into methylthioribose-1-phosphate. The chain is Methylthioribose kinase from Yersinia pseudotuberculosis serotype O:3 (strain YPIII).